Reading from the N-terminus, the 339-residue chain is Ketol-acid reductoisomerase (NADP(+)) (339 aa).

In terms of domain architecture, KARI N-terminal Rossmann spans 1–182; that stretch reads MRVYYDCDVN…GGGRSGIMKT (182 aa). NADP(+) is bound by residues 24–27, serine 51, threonine 53, and 83–86; these read YGAQ and DELQ. Histidine 108 is an active-site residue. Residue glycine 134 coordinates NADP(+). Residues 183–328 form the KARI C-terminal knotted domain; sequence TFREECETDL…DKIRSMMALT (146 aa). 4 residues coordinate Mg(2+): aspartate 191, glutamate 195, glutamate 227, and glutamate 231. Serine 252 lines the substrate pocket.

This sequence belongs to the ketol-acid reductoisomerase family. The cofactor is Mg(2+).

It carries out the reaction (2R)-2,3-dihydroxy-3-methylbutanoate + NADP(+) = (2S)-2-acetolactate + NADPH + H(+). It catalyses the reaction (2R,3R)-2,3-dihydroxy-3-methylpentanoate + NADP(+) = (S)-2-ethyl-2-hydroxy-3-oxobutanoate + NADPH + H(+). The protein operates within amino-acid biosynthesis; L-isoleucine biosynthesis; L-isoleucine from 2-oxobutanoate: step 2/4. It functions in the pathway amino-acid biosynthesis; L-valine biosynthesis; L-valine from pyruvate: step 2/4. Involved in the biosynthesis of branched-chain amino acids (BCAA). Catalyzes an alkyl-migration followed by a ketol-acid reduction of (S)-2-acetolactate (S2AL) to yield (R)-2,3-dihydroxy-isovalerate. In the isomerase reaction, S2AL is rearranged via a Mg-dependent methyl migration to produce 3-hydroxy-3-methyl-2-ketobutyrate (HMKB). In the reductase reaction, this 2-ketoacid undergoes a metal-dependent reduction by NADPH to yield (R)-2,3-dihydroxy-isovalerate. The polypeptide is Ketol-acid reductoisomerase (NADP(+)) (Bartonella bacilliformis (strain ATCC 35685 / KC583 / Herrer 020/F12,63)).